We begin with the raw amino-acid sequence, 295 residues long: Cytidine deaminase (295 aa).

2 consecutive CMP/dCMP-type deaminase domains span residues 48–168 (EDSD…FGPA) and 187–295 (DDDE…YLSL). Residue 89-91 (NME) coordinates substrate. Residue histidine 102 participates in Zn(2+) binding. Residue glutamate 104 is the Proton donor of the active site. Residues cysteine 129 and cysteine 132 each coordinate Zn(2+).

This sequence belongs to the cytidine and deoxycytidylate deaminase family. In terms of assembly, homodimer. It depends on Zn(2+) as a cofactor.

The catalysed reaction is cytidine + H2O + H(+) = uridine + NH4(+). It carries out the reaction 2'-deoxycytidine + H2O + H(+) = 2'-deoxyuridine + NH4(+). In terms of biological role, this enzyme scavenges exogenous and endogenous cytidine and 2'-deoxycytidine for UMP synthesis. This is Cytidine deaminase from Vibrio cholerae serotype O1 (strain ATCC 39541 / Classical Ogawa 395 / O395).